We begin with the raw amino-acid sequence, 483 residues long: Glutamyl-tRNA(Gln) amidotransferase subunit A (483 aa).

Active-site charge relay system residues include Lys-75 and Ser-150. The active-site Acyl-ester intermediate is Ser-174.

The protein belongs to the amidase family. GatA subfamily. As to quaternary structure, heterotrimer of A, B and C subunits.

It catalyses the reaction L-glutamyl-tRNA(Gln) + L-glutamine + ATP + H2O = L-glutaminyl-tRNA(Gln) + L-glutamate + ADP + phosphate + H(+). Allows the formation of correctly charged Gln-tRNA(Gln) through the transamidation of misacylated Glu-tRNA(Gln) in organisms which lack glutaminyl-tRNA synthetase. The reaction takes place in the presence of glutamine and ATP through an activated gamma-phospho-Glu-tRNA(Gln). The chain is Glutamyl-tRNA(Gln) amidotransferase subunit A from Gloeothece citriformis (strain PCC 7424) (Cyanothece sp. (strain PCC 7424)).